The sequence spans 70 residues: Putative defensin-like protein 280 (70 aa).

Positions 1-23 (MASIKHFFLVFICVSVLLTSGLA) are cleaved as a signal peptide. 3 disulfides stabilise this stretch: Cys30–Cys53, Cys39–Cys65, and Cys43–Cys67.

It belongs to the DEFL family.

It is found in the secreted. The sequence is that of Putative defensin-like protein 280 from Arabidopsis thaliana (Mouse-ear cress).